A 125-amino-acid polypeptide reads, in one-letter code: UPF0102 protein Rpic_3463 (125 aa).

The protein belongs to the UPF0102 family.

The protein is UPF0102 protein Rpic_3463 of Ralstonia pickettii (strain 12J).